Here is a 305-residue protein sequence, read N- to C-terminus: Small ribosomal subunit biogenesis GTPase RsgA (305 aa).

Residues 67-224 enclose the CP-type G domain; the sequence is SSELVRPAVA…VADTPGFSSF (158 aa). GTP is bound by residues 116-119 and 166-174; these read NKID and GQSGVGKST. Positions 248, 253, 255, and 261 each coordinate Zn(2+).

The protein belongs to the TRAFAC class YlqF/YawG GTPase family. RsgA subfamily. Monomer. Associates with 30S ribosomal subunit, binds 16S rRNA. The cofactor is Zn(2+).

Its subcellular location is the cytoplasm. In terms of biological role, one of several proteins that assist in the late maturation steps of the functional core of the 30S ribosomal subunit. Helps release RbfA from mature subunits. May play a role in the assembly of ribosomal proteins into the subunit. Circularly permuted GTPase that catalyzes slow GTP hydrolysis, GTPase activity is stimulated by the 30S ribosomal subunit. This Ruminiclostridium cellulolyticum (strain ATCC 35319 / DSM 5812 / JCM 6584 / H10) (Clostridium cellulolyticum) protein is Small ribosomal subunit biogenesis GTPase RsgA.